The sequence spans 60 residues: MAVPKFKPSKSRSRTRRSINMRKKIPQFQECSNCGNLVVRHRICLKCGYYRNNQYLEISL.

It belongs to the bacterial ribosomal protein bL32 family.

The chain is Large ribosomal subunit protein bL32 from Borreliella afzelii (strain PKo) (Borrelia afzelii).